A 444-amino-acid polypeptide reads, in one-letter code: Transcriptional regulatory protein GlrR (444 aa).

Residues 7–121 (HLLLVDDDPG…ALYQAIDDAL (115 aa)) enclose the Response regulatory domain. Position 56 is a 4-aspartylphosphate (Asp56). A Sigma-54 factor interaction domain is found at 136-366 (IVTRSPLMLR…VNVIEQCVAL (231 aa)). ATP contacts are provided by residues 164–171 (GQSGTGKE) and 227–236 (AEGGTLFLDE). The segment at residues 414–433 (VTHAARMAGRNRTEFYKLLS) is a DNA-binding region (H-T-H motif).

Phosphorylated by GlrK.

The protein resides in the cytoplasm. Member of the two-component regulatory system GlrR/GlrK that up-regulates transcription of the glmY sRNA when cells enter the stationary growth phase. Regulates glmY transcription by binding to three conserved sites in the purL-glmY intergenic region. This Escherichia coli (strain K12) protein is Transcriptional regulatory protein GlrR (glrR).